Reading from the N-terminus, the 199-residue chain is Outer dense fiber protein 4 (199 aa).

Residues 1–14 (MNIRSLERAGRAGK) show a composition bias toward basic and acidic residues. The segment at 1 to 25 (MNIRSLERAGRAGKQDGVAVSPGQE) is disordered. At S53 the chain carries Phosphoserine. 3 helical membrane passes run 68–88 (IAQV…VVMV), 109–128 (VTTK…LHIY), and 159–179 (LALG…IPGL).

It is found in the membrane. In terms of biological role, component of the outer dense fibers (ODF) of spermatozoa which could be involved in sperm tail structure, sperm movement and general organization of cellular cytoskeleton. The protein is Outer dense fiber protein 4 (ODF4) of Bos taurus (Bovine).